The chain runs to 188 residues: Ribosome maturation factor RimM (188 aa).

The 74-residue stretch at 96-169 (DDEFYYADLE…RILIDPMAAG (74 aa)) folds into the PRC barrel domain.

It belongs to the RimM family. In terms of assembly, binds ribosomal protein uS19.

It is found in the cytoplasm. An accessory protein needed during the final step in the assembly of 30S ribosomal subunit, possibly for assembly of the head region. Essential for efficient processing of 16S rRNA. May be needed both before and after RbfA during the maturation of 16S rRNA. It has affinity for free ribosomal 30S subunits but not for 70S ribosomes. This is Ribosome maturation factor RimM from Agrobacterium fabrum (strain C58 / ATCC 33970) (Agrobacterium tumefaciens (strain C58)).